Here is a 122-residue protein sequence, read N- to C-terminus: Large ribosomal subunit protein uL14 (122 aa).

The protein belongs to the universal ribosomal protein uL14 family. As to quaternary structure, part of the 50S ribosomal subunit. Forms a cluster with proteins L3 and L19. In the 70S ribosome, L14 and L19 interact and together make contacts with the 16S rRNA in bridges B5 and B8.

Functionally, binds to 23S rRNA. Forms part of two intersubunit bridges in the 70S ribosome. This Staphylococcus aureus (strain MW2) protein is Large ribosomal subunit protein uL14.